A 264-amino-acid polypeptide reads, in one-letter code: 3-methyl-2-oxobutanoate hydroxymethyltransferase (264 aa).

2 residues coordinate Mg(2+): D45 and D84. 3-methyl-2-oxobutanoate contacts are provided by residues 45–46 (DS), D84, and K112. Mg(2+) is bound at residue E114. The active-site Proton acceptor is the E181.

It belongs to the PanB family. In terms of assembly, homodecamer; pentamer of dimers. Mg(2+) is required as a cofactor.

It localises to the cytoplasm. The catalysed reaction is 3-methyl-2-oxobutanoate + (6R)-5,10-methylene-5,6,7,8-tetrahydrofolate + H2O = 2-dehydropantoate + (6S)-5,6,7,8-tetrahydrofolate. It functions in the pathway cofactor biosynthesis; (R)-pantothenate biosynthesis; (R)-pantoate from 3-methyl-2-oxobutanoate: step 1/2. Catalyzes the reversible reaction in which hydroxymethyl group from 5,10-methylenetetrahydrofolate is transferred onto alpha-ketoisovalerate to form ketopantoate. The chain is 3-methyl-2-oxobutanoate hydroxymethyltransferase from Escherichia coli O81 (strain ED1a).